The sequence spans 338 residues: Glyceraldehyde-3-phosphate dehydrogenase 2 (338 aa).

NAD(+)-binding positions include 13–14 (RI), aspartate 35, and arginine 80. D-glyceraldehyde 3-phosphate is bound by residues 151–153 (SCT), threonine 182, 211–212 (TG), and arginine 234. Catalysis depends on cysteine 152, which acts as the Nucleophile. Asparagine 316 is an NAD(+) binding site.

The protein belongs to the glyceraldehyde-3-phosphate dehydrogenase family. Homotetramer.

It is found in the cytoplasm. It catalyses the reaction D-glyceraldehyde 3-phosphate + phosphate + NAD(+) = (2R)-3-phospho-glyceroyl phosphate + NADH + H(+). It functions in the pathway carbohydrate degradation; glycolysis; pyruvate from D-glyceraldehyde 3-phosphate: step 1/5. Inhibited by koningic acid through the interaction of cysteine residues with koningic acid even at very low concentrations. The sequence is that of Glyceraldehyde-3-phosphate dehydrogenase 2 (gpd2) from Trichoderma koningii (Hypocrea koningii).